The chain runs to 381 residues: Succinyl-diaminopimelate desuccinylase (381 aa).

Position 69 (H69) interacts with Zn(2+). D71 is an active-site residue. A Zn(2+)-binding site is contributed by D103. E137 acts as the Proton acceptor in catalysis. The Zn(2+) site is built by E138, E166, and H355.

This sequence belongs to the peptidase M20A family. DapE subfamily. As to quaternary structure, homodimer. Zn(2+) is required as a cofactor. The cofactor is Co(2+).

It catalyses the reaction N-succinyl-(2S,6S)-2,6-diaminopimelate + H2O = (2S,6S)-2,6-diaminopimelate + succinate. It participates in amino-acid biosynthesis; L-lysine biosynthesis via DAP pathway; LL-2,6-diaminopimelate from (S)-tetrahydrodipicolinate (succinylase route): step 3/3. In terms of biological role, catalyzes the hydrolysis of N-succinyl-L,L-diaminopimelic acid (SDAP), forming succinate and LL-2,6-diaminopimelate (DAP), an intermediate involved in the bacterial biosynthesis of lysine and meso-diaminopimelic acid, an essential component of bacterial cell walls. The chain is Succinyl-diaminopimelate desuccinylase from Rickettsia rickettsii (strain Iowa).